A 754-amino-acid chain; its full sequence is Polyadenylate-binding protein, cytoplasmic and nuclear (754 aa).

Residues 1 to 25 (MSAEVSTTPAADNVNGTPEATNAAA) are compositionally biased toward polar residues. The segment at 1–52 (MSAEVSTTPAADNVNGTPEATNAAATSAPEVTAVESSSPTSPNNNNQPHSAS) is disordered. Over residues 36-46 (SSSPTSPNNNN) the composition is skewed to low complexity. 4 consecutive RRM domains span residues 51–129 (ASLY…WSQR), 139–216 (GNVF…HHIS), 232–309 (TNIY…RAQK), and 335–465 (VNLY…LAQR). 2 disordered regions span residues 365 to 420 (KVMR…KKSD) and 595 to 648 (RGGG…EEAP). The span at 366-420 (VMRDSTPAERTETPDSEKEKEVNKENEKKEDEEKAAEEKPKESDEEKKDETKKSD) shows a compositional bias: basic and acidic residues. Residues 610–633 (GMRGPGYQGRGGPQGGPRPQGGRG) are compositionally biased toward gly residues. The segment covering 634-648 (QNAAAQPAAGREEAP) has biased composition (low complexity). The PABC domain occupies 649–726 (AGALTAQALN…ALSVYDEYMK (78 aa)). The tract at residues 729–754 (GEGEAPADADKPKEAAKETATEENKS) is disordered.

This sequence belongs to the polyadenylate-binding protein type-1 family.

It is found in the cytoplasm. Its subcellular location is the nucleus. Functionally, binds the poly(A) tail of mRNA. Appears to be an important mediator of the multiple roles of the poly(A) tail in mRNA biogenesis, stability and translation. In the nucleus, involved in both mRNA cleavage and polyadenylation. Is also required for efficient mRNA export to the cytoplasm. Acts in concert with a poly(A)-specific nuclease (PAN) to affect poly(A) tail shortening, which may occur concomitantly with either nucleocytoplasmic mRNA transport or translational initiation. In the cytoplasm, stimulates translation initiation and regulates mRNA decay through translation termination-coupled poly(A) shortening, probably mediated by PAN. The chain is Polyadenylate-binding protein, cytoplasmic and nuclear (pab1) from Aspergillus clavatus (strain ATCC 1007 / CBS 513.65 / DSM 816 / NCTC 3887 / NRRL 1 / QM 1276 / 107).